A 77-amino-acid polypeptide reads, in one-letter code: Small ribosomal subunit protein bS18 (77 aa).

This sequence belongs to the bacterial ribosomal protein bS18 family. In terms of assembly, part of the 30S ribosomal subunit. Forms a tight heterodimer with protein bS6.

Binds as a heterodimer with protein bS6 to the central domain of the 16S rRNA, where it helps stabilize the platform of the 30S subunit. The polypeptide is Small ribosomal subunit protein bS18 (Halalkalibacterium halodurans (strain ATCC BAA-125 / DSM 18197 / FERM 7344 / JCM 9153 / C-125) (Bacillus halodurans)).